We begin with the raw amino-acid sequence, 318 residues long: Malate dehydrogenase (318 aa).

NAD(+)-binding positions include 11-17 and aspartate 37; that span reads GAGGNVG. Residues arginine 86 and arginine 92 each contribute to the substrate site. Residues asparagine 99 and 122-124 each bind NAD(+); that span reads VTN. Residues asparagine 124 and arginine 155 each contribute to the substrate site. Histidine 179 acts as the Proton acceptor in catalysis.

Belongs to the LDH/MDH superfamily. MDH type 3 family.

It carries out the reaction (S)-malate + NAD(+) = oxaloacetate + NADH + H(+). In terms of biological role, catalyzes the reversible oxidation of malate to oxaloacetate. The polypeptide is Malate dehydrogenase (Nitratiruptor sp. (strain SB155-2)).